A 175-amino-acid chain; its full sequence is Peptide deformylase (175 aa).

Fe cation is bound by residues Cys96 and His138. Glu139 is an active-site residue. His142 is a binding site for Fe cation.

It belongs to the polypeptide deformylase family. Fe(2+) is required as a cofactor.

It catalyses the reaction N-terminal N-formyl-L-methionyl-[peptide] + H2O = N-terminal L-methionyl-[peptide] + formate. Its function is as follows. Removes the formyl group from the N-terminal Met of newly synthesized proteins. Requires at least a dipeptide for an efficient rate of reaction. N-terminal L-methionine is a prerequisite for activity but the enzyme has broad specificity at other positions. The polypeptide is Peptide deformylase (Helicobacter pylori (strain Shi470)).